A 270-amino-acid polypeptide reads, in one-letter code: Formamidopyrimidine-DNA glycosylase (270 aa).

The Schiff-base intermediate with DNA role is filled by proline 2. Residue glutamate 3 is the Proton donor of the active site. Lysine 58 serves as the catalytic Proton donor; for beta-elimination activity. Residues histidine 90, arginine 109, and arginine 152 each coordinate DNA. Residues 237-270 (RVYGREGEPCQCGGVVKRIVQGGRSTFFCPRCQK) form an FPG-type zinc finger. Arginine 260 serves as the catalytic Proton donor; for delta-elimination activity.

This sequence belongs to the FPG family. As to quaternary structure, monomer. Zn(2+) is required as a cofactor.

The catalysed reaction is Hydrolysis of DNA containing ring-opened 7-methylguanine residues, releasing 2,6-diamino-4-hydroxy-5-(N-methyl)formamidopyrimidine.. It catalyses the reaction 2'-deoxyribonucleotide-(2'-deoxyribose 5'-phosphate)-2'-deoxyribonucleotide-DNA = a 3'-end 2'-deoxyribonucleotide-(2,3-dehydro-2,3-deoxyribose 5'-phosphate)-DNA + a 5'-end 5'-phospho-2'-deoxyribonucleoside-DNA + H(+). Its function is as follows. Involved in base excision repair of DNA damaged by oxidation or by mutagenic agents. Acts as a DNA glycosylase that recognizes and removes damaged bases. Has a preference for oxidized purines, such as 7,8-dihydro-8-oxoguanine (8-oxoG). Has AP (apurinic/apyrimidinic) lyase activity and introduces nicks in the DNA strand. Cleaves the DNA backbone by beta-delta elimination to generate a single-strand break at the site of the removed base with both 3'- and 5'-phosphates. This is Formamidopyrimidine-DNA glycosylase from Novosphingobium aromaticivorans (strain ATCC 700278 / DSM 12444 / CCUG 56034 / CIP 105152 / NBRC 16084 / F199).